Here is a 378-residue protein sequence, read N- to C-terminus: Deoxyhypusine synthase (378 aa).

NAD(+)-binding positions include 107–111 (SNLIS), 133–135 (SAG), glutamate 139, and aspartate 253. Residue 138–139 (EE) coordinates spermidine. Residue aspartate 258 participates in spermidine binding. An NAD(+)-binding site is contributed by glycine 300. Histidine 305 serves as a coordination point for spermidine. 325 to 326 (TG) is a binding site for NAD(+). Spermidine is bound by residues 331–333 (GSD) and 340–346 (EAISWGK). Catalysis depends on lysine 346, which acts as the Nucleophile. An NAD(+)-binding site is contributed by 359 to 360 (DA).

It belongs to the deoxyhypusine synthase family. NAD(+) serves as cofactor.

It carries out the reaction [eIF5A protein]-L-lysine + spermidine = [eIF5A protein]-deoxyhypusine + propane-1,3-diamine. Its pathway is protein modification; eIF5A hypusination. Its function is as follows. Catalyzes the NAD-dependent oxidative cleavage of spermidine and the subsequent transfer of the butylamine moiety of spermidine to the epsilon-amino group of a specific lysine residue of the eIF-5A precursor protein to form the intermediate deoxyhypusine residue. The chain is Deoxyhypusine synthase (DYS1) from Debaryomyces hansenii (strain ATCC 36239 / CBS 767 / BCRC 21394 / JCM 1990 / NBRC 0083 / IGC 2968) (Yeast).